We begin with the raw amino-acid sequence, 94 residues long: Small ribosomal subunit protein uS19 (94 aa).

It belongs to the universal ribosomal protein uS19 family.

Its function is as follows. Protein S19 forms a complex with S13 that binds strongly to the 16S ribosomal RNA. This Nitrosomonas eutropha (strain DSM 101675 / C91 / Nm57) protein is Small ribosomal subunit protein uS19.